A 379-amino-acid chain; its full sequence is Stimulator of interferon genes protein (379 aa).

2 helical membrane-spanning segments follow: residues 18-38 (AKKAAFVLLSVCLVVLWDLGE) and 43-63 (ILQWLMLHLASLQLGLLFKGV). S-palmitoyl cysteine attachment occurs at residues Cys-88 and Cys-91. A run of 2 helical transmembrane segments spans residues 89 to 109 (LGCPIRCGTLLLLSCYFYTPF) and 114 to 134 (HLPFTWTLALLGLSQALSILL). The segment at 153–340 (LNVAQGMAWS…RHLKQEEKEE (188 aa)) is cyclic dinucleotide-binding domain (CBD). Positions 162, 167, 238, and 263 each coordinate 2',3'-cGAMP. Residues Ser-162, Tyr-167, 238–241 (RVYT), and Thr-263 each bind 3',3'-c-di-GMP. The 2',3'-cUAMP site is built by Tyr-167, Arg-238, and Thr-263. Residues 338 to 363 (KEEVTVDSARTSVMPDPSMLPQGPEL) are disordered. Positions 340-379 (EVTVDSARTSVMPDPSMLPQGPELLISSMDQPLPLRTDVF) are C-terminal tail (CTT). A Phosphoserine modification is found at Ser-355. Residues 363 to 366 (LLIS) carry the pLxIS motif motif. Ser-366 carries the phosphoserine; by TBK1 modification.

This sequence belongs to the STING family. Homodimer; forms a homodimer in absence of cyclic nucleotide (c-di-GMP or cGAMP). Homotetramer; in presence of cyclic nucleotide (c-di-GMP or cGAMP), forms tetramers and higher-order oligomers through side-by-side packing. Interacts (when phosphorylated) with IRF3; following activation and phosphorylation on the pLxIS motif by TBK1, recruits IRF3. Interacts with TBK1; when homodimer, leading to subsequent production of IFN-beta. Interacts (via transmembrane domain) with TMEM203. In terms of processing, phosphorylation by TBK1 leads to activation and production of IFN-beta. Following cyclic nucleotide (c-di-GMP or cGAMP)-binding, activation and translocation from the endoplasmic reticulum, STING1 is phosphorylated by TBK1 at Ser-366 in the pLxIS motif. The phosphorylated pLxIS motif constitutes an IRF3-binding motif, leading to recruitment of the transcription factor IRF3 to induce type-I interferons and other cytokines. In contrast, lacks phosphorylation site at position 358, leading to reduced production of type-I interferons and other cytokines.

It localises to the endoplasmic reticulum membrane. The protein localises to the cytoplasm. Its subcellular location is the perinuclear region. The protein resides in the endoplasmic reticulum-Golgi intermediate compartment membrane. It is found in the golgi apparatus membrane. It localises to the cytoplasmic vesicle. The protein localises to the autophagosome membrane. Its subcellular location is the mitochondrion outer membrane. The protein resides in the cell membrane. It catalyses the reaction H(+)(in) = H(+)(out). Its function is as follows. Facilitator of innate immune signaling that acts as a sensor of cytosolic DNA from bacteria and viruses and promotes low production of type I interferon (IFN-alpha and IFN-beta). Compared to other mammals, STING1-dependent type I interferon induction is strongly reduced in bats, suggesting that the cGAS-STING pathway promotes a limited inflammatory response. Innate immune response is triggered in response to non-CpG double-stranded DNA from viruses and bacteria delivered to the cytoplasm. Acts by binding cyclic dinucleotides: recognizes and binds cyclic di-GMP (c-di-GMP), a second messenger produced by bacteria, cyclic UMP-AMP (2',3'-cUAMP), and cyclic GMP-AMP (cGAMP), a messenger produced by CGAS in response to DNA virus in the cytosol. Upon binding to c-di-GMP, cUAMP or cGAMP, STING1 oligomerizes, translocates from the endoplasmic reticulum and is phosphorylated by TBK1 on the pLxIS motif, leading to recruitment and subsequent activation of the transcription factor IRF3 to induce expression of type I interferon and exert a potent anti-viral state. In addition to promote the production of type I interferons, plays a direct role in autophagy. Following cGAMP-binding, STING1 buds from the endoplasmic reticulum into COPII vesicles, which then form the endoplasmic reticulum-Golgi intermediate compartment (ERGIC). The ERGIC serves as the membrane source for WIPI2 recruitment and LC3 lipidation, leading to formation of autophagosomes that target cytosolic DNA or DNA viruses for degradation by the lysosome. Promotes autophagy by acting as a proton channel that directs proton efflux from the Golgi to facilitate MAP1LC3B/LC3B lipidation. The autophagy- and interferon-inducing activities can be uncoupled and autophagy induction is independent of TBK1 phosphorylation. This chain is Stimulator of interferon genes protein, found in Pteronotus parnellii (Parnell's mustached bat).